A 193-amino-acid chain; its full sequence is Recombination protein RecR (193 aa).

A C4-type zinc finger spans residues 61–76; the sequence is CSSCNALSESEVCEIC. The Toprim domain occupies 84–170; it reads SQLCMVLHPR…TFTKIAQGVP (87 aa).

It belongs to the RecR family.

Functionally, may play a role in DNA repair. It seems to be involved in an RecBC-independent recombinational process of DNA repair. It may act with RecF and RecO. The protein is Recombination protein RecR of Helicobacter pylori (strain G27).